Reading from the N-terminus, the 371-residue chain is MKIAVPKEIKNHEYRVALTPSGARELVGRGHDVIVQAAAGEGAGFSDADFEAAGARLEADVAKLWDDAELILKVKEPQAEEVARLSAGQTLFTYLHLAAEESLTKGLLDSGATCIAYETITAPEGGLPLLAPMSTVAGRMAVQAGAHSLEKAQGGAGILLPGVPGVAPARVTVIGGGVVGENAARMALGLGAEVTVLDKSIPRLETLDDRYQGRMKTVFSTADALEEAVRESDLIIGAVLVPGAAAPKLITRDMLSDMKPGSVLVDVAIDQGGCFETSKPTTHAEPTYVVDGVVHYCVANMPGAVARTSTQALTNATLPFVVALADKGWQKALADDDHFAAGLNVHDGKLTYRAVAEAFGLEYVEAASLIG.

2 residues coordinate substrate: Arg-15 and Lys-75. The active-site Proton donor/acceptor is the His-96. NAD(+)-binding positions include Ser-134, Asp-198, Arg-203, Ser-220, 239 to 240, 267 to 270, Lys-279, and 298 to 301; these read VL, VAID, and VANM. Asp-270 (proton donor/acceptor) is an active-site residue.

It belongs to the AlaDH/PNT family. It depends on Mg(2+) as a cofactor.

It carries out the reaction L-alanine + NAD(+) + H2O = pyruvate + NH4(+) + NADH + H(+). Its pathway is amino-acid degradation; L-alanine degradation via dehydrogenase pathway; NH(3) and pyruvate from L-alanine: step 1/1. Its function is as follows. Catalyzes the reversible reductive amination of pyruvate to L-alanine. The chain is Alanine dehydrogenase from Halomonas elongata (strain ATCC 33173 / DSM 2581 / NBRC 15536 / NCIMB 2198 / 1H9).